The sequence spans 174 residues: Solute carrier family 2, facilitated glucose transporter member 4 (174 aa).

The Cytoplasmic portion of the chain corresponds to 1-19 (QQIGSEDGEPPQQRVTGTL). Positions 2 to 8 (QIGSEDG) are interaction with SRFBP1. Position 5 is a phosphoserine (serine 5). Residues 20–40 (VLAVFSAVLGSLQFGYNIGVI) traverse the membrane as a helical segment. Residues 41 to 76 (NAPQKVIEQSYNETWLGRQGPNGPGSIPPGTLTTLW) lie on the Extracellular side of the membrane. Asparagine 52 is a glycosylation site (N-linked (GlcNAc...) asparagine). The chain crosses the membrane as a helical span at residues 77 to 97 (ALSVAIFSVGGMFSSFLLGII). The Cytoplasmic segment spans residues 98–114 (SQWLGRKKAMLFNNTLA). The helical transmembrane segment at 115 to 135 (VLAGALMGLAKAAASYEMLIL) threads the bilayer. Over 136–137 (GR) the chain is Extracellular. Residues 138–158 (FLIGAYSGLASGLVPMYVGEI) form a helical membrane-spanning segment. Topologically, residues 159-166 (APTHLRGA) are cytoplasmic. Residues 167 to 174 (LGTLNQLA) traverse the membrane as a helical segment.

The protein belongs to the major facilitator superfamily. Sugar transporter (TC 2.A.1.1) family. Glucose transporter subfamily. Binds to DAXX. Interacts via its N-terminus with SRFBP1. Interacts with NDUFA9. Interacts with TRARG1; the interaction is required for proper SLC2A4 recycling after insulin stimulation. Sumoylated. Post-translationally, palmitoylated. Palmitoylation by ZDHHC7 controls the insulin-dependent translocation of GLUT4 to the plasma membrane.

The protein resides in the cell membrane. It is found in the endomembrane system. Its subcellular location is the cytoplasm. The protein localises to the perinuclear region. The enzyme catalyses D-glucose(out) = D-glucose(in). In terms of biological role, insulin-regulated facilitative glucose transporter, which plays a key role in removal of glucose from circulation. Response to insulin is regulated by its intracellular localization: in the absence of insulin, it is efficiently retained intracellularly within storage compartments in muscle and fat cells. Upon insulin stimulation, translocates from these compartments to the cell surface where it transports glucose from the extracellular milieu into the cell. This chain is Solute carrier family 2, facilitated glucose transporter member 4, found in Sus scrofa (Pig).